Reading from the N-terminus, the 212-residue chain is Outer-membrane lipoprotein carrier protein (212 aa).

A signal peptide spans 1–25 (MRKRILVSACAALAVFAAHMPTALA).

Belongs to the LolA family. In terms of assembly, monomer.

The protein localises to the periplasm. In terms of biological role, participates in the translocation of lipoproteins from the inner membrane to the outer membrane. Only forms a complex with a lipoprotein if the residue after the N-terminal Cys is not an aspartate (The Asp acts as a targeting signal to indicate that the lipoprotein should stay in the inner membrane). The chain is Outer-membrane lipoprotein carrier protein from Cupriavidus pinatubonensis (strain JMP 134 / LMG 1197) (Cupriavidus necator (strain JMP 134)).